The following is a 251-amino-acid chain: Imidazole glycerol phosphate synthase subunit HisF (251 aa).

Residues D12 and D131 contribute to the active site.

Belongs to the HisA/HisF family. Heterodimer of HisH and HisF.

The protein localises to the cytoplasm. The enzyme catalyses 5-[(5-phospho-1-deoxy-D-ribulos-1-ylimino)methylamino]-1-(5-phospho-beta-D-ribosyl)imidazole-4-carboxamide + L-glutamine = D-erythro-1-(imidazol-4-yl)glycerol 3-phosphate + 5-amino-1-(5-phospho-beta-D-ribosyl)imidazole-4-carboxamide + L-glutamate + H(+). The protein operates within amino-acid biosynthesis; L-histidine biosynthesis; L-histidine from 5-phospho-alpha-D-ribose 1-diphosphate: step 5/9. IGPS catalyzes the conversion of PRFAR and glutamine to IGP, AICAR and glutamate. The HisF subunit catalyzes the cyclization activity that produces IGP and AICAR from PRFAR using the ammonia provided by the HisH subunit. The sequence is that of Imidazole glycerol phosphate synthase subunit HisF from Helicobacter hepaticus (strain ATCC 51449 / 3B1).